The sequence spans 434 residues: Putative B3 domain-containing protein Os04g0347400 (434 aa).

3 DNA-binding regions (TF-B3) span residues 27 to 124 (SFHK…FDTT), 150 to 246 (KPQF…FGIN), and 326 to 432 (WIKK…DRVE).

The protein resides in the nucleus. The protein is Putative B3 domain-containing protein Os04g0347400 of Oryza sativa subsp. japonica (Rice).